Consider the following 232-residue polypeptide: Ribose-5-phosphate isomerase A (232 aa).

Substrate is bound by residues Thr-31–Thr-34, Asp-88–Asp-91, and Lys-101–Gly-104. Glu-110 acts as the Proton acceptor in catalysis. Lys-128 serves as a coordination point for substrate.

The protein belongs to the ribose 5-phosphate isomerase family. As to quaternary structure, homodimer.

The enzyme catalyses aldehydo-D-ribose 5-phosphate = D-ribulose 5-phosphate. Its pathway is carbohydrate degradation; pentose phosphate pathway; D-ribose 5-phosphate from D-ribulose 5-phosphate (non-oxidative stage): step 1/1. In terms of biological role, catalyzes the reversible conversion of ribose-5-phosphate to ribulose 5-phosphate. The protein is Ribose-5-phosphate isomerase A of Lactobacillus johnsonii (strain CNCM I-12250 / La1 / NCC 533).